A 236-amino-acid polypeptide reads, in one-letter code: Ribose-5-phosphate isomerase A (236 aa).

Substrate contacts are provided by residues 29–32 (SGST), 86–89 (DGAD), and 99–102 (KGGG). Glu-108 serves as the catalytic Proton acceptor. Lys-126 contributes to the substrate binding site.

This sequence belongs to the ribose 5-phosphate isomerase family. In terms of assembly, homodimer.

The enzyme catalyses aldehydo-D-ribose 5-phosphate = D-ribulose 5-phosphate. It functions in the pathway carbohydrate degradation; pentose phosphate pathway; D-ribose 5-phosphate from D-ribulose 5-phosphate (non-oxidative stage): step 1/1. In terms of biological role, catalyzes the reversible conversion of ribose-5-phosphate to ribulose 5-phosphate. This is Ribose-5-phosphate isomerase A from Prochlorococcus marinus (strain NATL2A).